We begin with the raw amino-acid sequence, 154 residues long: MNKKRDKGQSHSTRPARAGPPRWLKLDMSPSDIELLVVELAKKGYTPSMIGIILRDQYGVPLVKQVTGKKLVQILEKHGIKLPVPEDLLFLMRKAVNLRRHLEEHPKDFHAKKGLLDLESKIHRLVKYYKRIGRLPPDWKYTPEQAKLIVSAYL.

The tract at residues 1–23 (MNKKRDKGQSHSTRPARAGPPRW) is disordered.

This sequence belongs to the universal ribosomal protein uS15 family. As to quaternary structure, part of the 30S ribosomal subunit.

This chain is Small ribosomal subunit protein uS15, found in Staphylothermus marinus (strain ATCC 43588 / DSM 3639 / JCM 9404 / F1).